Here is a 270-residue protein sequence, read N- to C-terminus: Thiamine thiazole synthase (270 aa).

Residues Ala-39, 58–59, Gly-66, and Leu-130 contribute to the NAD(+) site; that span reads EQ. Residue Cys-159 is modified to 2,3-didehydroalanine (Cys). Asp-161 contacts NAD(+). Residues Asp-161 and His-176 each contribute to the Fe cation site. Ile-223 is a binding site for NAD(+). Glycine is bound at residue Arg-233.

Belongs to the THI4 family. In terms of assembly, homooctamer; tetramer of dimers. Fe(2+) serves as cofactor. Post-translationally, during the catalytic reaction, a sulfide is transferred from Cys-159 to a reaction intermediate, generating a dehydroalanine residue.

The catalysed reaction is [ADP-thiazole synthase]-L-cysteine + glycine + NAD(+) = [ADP-thiazole synthase]-dehydroalanine + ADP-5-ethyl-4-methylthiazole-2-carboxylate + nicotinamide + 3 H2O + 2 H(+). The protein operates within cofactor biosynthesis; thiamine diphosphate biosynthesis. Functionally, involved in biosynthesis of the thiamine precursor thiazole. Catalyzes the conversion of NAD and glycine to adenosine diphosphate 5-(2-hydroxyethyl)-4-methylthiazole-2-carboxylic acid (ADT), an adenylated thiazole intermediate. The reaction includes an iron-dependent sulfide transfer from a conserved cysteine residue of the protein to a thiazole intermediate. The enzyme can only undergo a single turnover, which suggests it is a suicide enzyme. This Aeropyrum pernix (strain ATCC 700893 / DSM 11879 / JCM 9820 / NBRC 100138 / K1) protein is Thiamine thiazole synthase.